We begin with the raw amino-acid sequence, 605 residues long: Elongation factor 4 (605 aa).

In terms of domain architecture, tr-type G spans 11–193; that stretch reads KRIRNFSIIA…QIVTRISPPQ (183 aa). GTP is bound by residues 23 to 28 and 140 to 143; these read DHGKST and NKVD.

This sequence belongs to the TRAFAC class translation factor GTPase superfamily. Classic translation factor GTPase family. LepA subfamily.

The protein localises to the cell membrane. It catalyses the reaction GTP + H2O = GDP + phosphate + H(+). Its function is as follows. Required for accurate and efficient protein synthesis under certain stress conditions. May act as a fidelity factor of the translation reaction, by catalyzing a one-codon backward translocation of tRNAs on improperly translocated ribosomes. Back-translocation proceeds from a post-translocation (POST) complex to a pre-translocation (PRE) complex, thus giving elongation factor G a second chance to translocate the tRNAs correctly. Binds to ribosomes in a GTP-dependent manner. This is Elongation factor 4 from Onion yellows phytoplasma (strain OY-M).